The chain runs to 514 residues: ATP synthase subunit alpha (514 aa).

Residue Gly170 to Thr177 coordinates ATP.

Belongs to the ATPase alpha/beta chains family. As to quaternary structure, F-type ATPases have 2 components, CF(1) - the catalytic core - and CF(0) - the membrane proton channel. CF(1) has five subunits: alpha(3), beta(3), gamma(1), delta(1), epsilon(1). CF(0) has three main subunits: a(1), b(2) and c(9-12). The alpha and beta chains form an alternating ring which encloses part of the gamma chain. CF(1) is attached to CF(0) by a central stalk formed by the gamma and epsilon chains, while a peripheral stalk is formed by the delta and b chains.

The protein localises to the cell inner membrane. It catalyses the reaction ATP + H2O + 4 H(+)(in) = ADP + phosphate + 5 H(+)(out). Functionally, produces ATP from ADP in the presence of a proton gradient across the membrane. The alpha chain is a regulatory subunit. This Psychrobacter sp. (strain PRwf-1) protein is ATP synthase subunit alpha.